The chain runs to 284 residues: Deoxyribonuclease-1 (284 aa).

An N-terminal signal peptide occupies residues 1-22 (MRYTGLMGTLLTLVNLLQLAGT). An N-linked (GlcNAc...) asparagine glycan is attached at asparagine 40. The active site involves glutamate 100. Cysteine 123 and cysteine 126 form a disulfide bridge. A glycan (N-linked (GlcNAc...) asparagine) is linked at asparagine 128. Histidine 156 is an active-site residue. The cysteines at positions 195 and 231 are disulfide-linked.

The protein belongs to the DNase I family. Requires Ca(2+) as cofactor. Mg(2+) is required as a cofactor. Post-translationally, N-glycosylated. As to expression, highly expressed in the parotid and submandibular gland as well as in the kidney and duodenum (at protein level). Expressed at intermediate level in the ileum, mesenterial lymph nodes, liver, ventral prostate, epididymis, ovary and stomach (at protein level). Expressed at low level in the sublingual, preputial, coagulation and pituitary gland (at protein level). Also present in the lachrymal and thyroid glands, striated muscle, intestine, the urinary bladder and the eye.

The protein localises to the secreted. The protein resides in the zymogen granule. Its subcellular location is the nucleus envelope. The catalysed reaction is Endonucleolytic cleavage to 5'-phosphodinucleotide and 5'-phosphooligonucleotide end-products.. Serum endocuclease secreted into body fluids by a wide variety of exocrine and endocrine organs. Expressed by non-hematopoietic tissues and preferentially cleaves protein-free DNA. Among other functions, seems to be involved in cell death by apoptosis. Binds specifically to G-actin and blocks actin polymerization. Together with DNASE1L3, plays a key role in degrading neutrophil extracellular traps (NETs). NETs are mainly composed of DNA fibers and are released by neutrophils to bind pathogens during inflammation. Degradation of intravascular NETs by DNASE1 and DNASE1L3 is required to prevent formation of clots that obstruct blood vessels and cause organ damage following inflammation. In Mus musculus (Mouse), this protein is Deoxyribonuclease-1.